Reading from the N-terminus, the 757-residue chain is Polyribonucleotide nucleotidyltransferase (757 aa).

Mg(2+) is bound by residues D488 and D494. The 60-residue stretch at 555–614 (PKLYTMKINAEKIRDVIGKGGAVIRALTEETGCQINIEEDGTITIAATDAAKADIAKRRI) folds into the KH domain. The S1 motif domain occupies 624-692 (GKIYEGPVTK…ERGRVKLSMK (69 aa)). The disordered stretch occupies residues 693-757 (VLAERPAPGS…ADTGSGQRVG (65 aa)). Basic and acidic residues predominate over residues 720 to 736 (ALAEREPRREMRDHGHP). The segment covering 737-747 (PSEQQQQQSPP) has biased composition (low complexity).

The protein belongs to the polyribonucleotide nucleotidyltransferase family. The cofactor is Mg(2+).

Its subcellular location is the cytoplasm. It catalyses the reaction RNA(n+1) + phosphate = RNA(n) + a ribonucleoside 5'-diphosphate. Its function is as follows. Involved in mRNA degradation. Catalyzes the phosphorolysis of single-stranded polyribonucleotides processively in the 3'- to 5'-direction. This Verminephrobacter eiseniae (strain EF01-2) protein is Polyribonucleotide nucleotidyltransferase.